A 615-amino-acid chain; its full sequence is Delta(14)-sterol reductase LBR (615 aa).

In terms of domain architecture, Tudor spans 1–62 (MPSRKFADGE…DIKPLTSFRQ (62 aa)). At 1–211 (MPSRKFADGE…IRAKDLEFGG (211 aa)) the chain is on the nuclear side. A disordered region spans residues 52 to 109 (NDIKPLTSFRQRKGGSTSSSPSRRRGSRSRSRSRSPGRPPKSARRSASASHQADIKEA). N6-acetyllysine is present on lysine 55. Threonine 58 bears the Phosphothreonine mark. A phosphoserine mark is found at serine 59 and serine 67. 2 positions are modified to phosphoserine; by CDK1: serine 71 and serine 86. Basic residues predominate over residues 73–86 (SRRRGSRSRSRSRS). Phosphoserine occurs at positions 97 and 99. Threonine 118 carries the phosphothreonine modification. Serine 128 carries the post-translational modification Phosphoserine. Residue threonine 200 is modified to Phosphothreonine. Transmembrane regions (helical) follow at residues 212–232 (VPGV…LLLM), 258–278 (VFGV…LPIG), 299–319 (FYAF…GVEF), 326–346 (FLQF…YLYM), 386–406 (FCEL…MLLA), 447–467 (IIHD…VPFI), 481–501 (EVSW…YVIF), and 561–581 (PCGF…MLLV). Lysine 594 and lysine 601 each carry N6-acetyllysine.

The protein belongs to the ERG4/ERG24 family. In terms of assembly, interacts with CBX5. Interacts with DNA. Interaction with DNA is sequence independent with higher affinity for supercoiled and relaxed circular DNA than linear DNA. Interacts with lamin B. Interacts with CLNK. Interacts with TMEM147; promoting LBR localization to the nucleus inner membrane. Phosphorylated by CDK1 in mitosis when the inner nuclear membrane breaks down into vesicles that dissociate from the lamina and the chromatin. It is phosphorylated by different protein kinases in interphase when the membrane is associated with these structures. Phosphorylation of LBR and HP1 proteins may be responsible for some of the alterations in chromatin organization and nuclear structure which occur at various times during the cell cycle. Phosphorylated by SRPK1. In late anaphase LBR is dephosphorylated, probably by PP1 and/or PP2A, allowing reassociation with chromatin. In terms of tissue distribution, expressed in the bone marrow, liver, heart, adrenal gland, lung, placenta and uterus. Expressed in osteoclasts and osteoblast-like cells.

It localises to the nucleus inner membrane. It is found in the endoplasmic reticulum membrane. Its subcellular location is the cytoplasm. The protein localises to the nucleus. The enzyme catalyses 5alpha-cholest-8,14-dien-3beta-ol + NADPH + H(+) = 5alpha-cholest-8-en-3beta-ol + NADP(+). It carries out the reaction 4,4-dimethyl-5alpha-cholesta-8,24-dien-3beta-ol + NADP(+) = 4,4-dimethyl-5alpha-cholesta-8,14,24-trien-3beta-ol + NADPH + H(+). The catalysed reaction is 4,4-dimethyl-8,14-cholestadien-3beta-ol + NADPH + H(+) = 4,4-dimethyl-5alpha-cholest-8-en-3beta-ol + NADP(+). Its pathway is steroid biosynthesis; cholesterol biosynthesis. Functionally, catalyzes the reduction of the C14-unsaturated bond of lanosterol, as part of the metabolic pathway leading to cholesterol biosynthesis. Plays a critical role in myeloid cell cholesterol biosynthesis which is essential to both myeloid cell growth and functional maturation. Mediates the activation of NADPH oxidases, perhaps by maintaining critical levels of cholesterol required for membrane lipid raft formation during neutrophil differentiation. Anchors the lamina and the heterochromatin to the inner nuclear membrane. In Homo sapiens (Human), this protein is Delta(14)-sterol reductase LBR (LBR).